Here is a 264-residue protein sequence, read N- to C-terminus: 3-methyl-2-oxobutanoate hydroxymethyltransferase (264 aa).

Mg(2+) contacts are provided by D45 and D84. Residues 45–46 (DS), D84, and K112 contribute to the 3-methyl-2-oxobutanoate site. E114 serves as a coordination point for Mg(2+). The active-site Proton acceptor is the E181.

It belongs to the PanB family. In terms of assembly, homodecamer; pentamer of dimers. Mg(2+) serves as cofactor.

The protein resides in the cytoplasm. The catalysed reaction is 3-methyl-2-oxobutanoate + (6R)-5,10-methylene-5,6,7,8-tetrahydrofolate + H2O = 2-dehydropantoate + (6S)-5,6,7,8-tetrahydrofolate. The protein operates within cofactor biosynthesis; (R)-pantothenate biosynthesis; (R)-pantoate from 3-methyl-2-oxobutanoate: step 1/2. Functionally, catalyzes the reversible reaction in which hydroxymethyl group from 5,10-methylenetetrahydrofolate is transferred onto alpha-ketoisovalerate to form ketopantoate. The polypeptide is 3-methyl-2-oxobutanoate hydroxymethyltransferase (Shewanella pealeana (strain ATCC 700345 / ANG-SQ1)).